The chain runs to 263 residues: Benzil reductase ((S)-benzoin forming) IRC24 (263 aa).

Positions 7 and 86 each coordinate NADP(+). Ser143 (proton donor) is an active-site residue. NADP(+) contacts are provided by Tyr157, Lys161, Val190, and Thr192. The Proton acceptor role is filled by Tyr157. Catalysis depends on Lys161, which acts as the Lowers pKa of active site Tyr.

It belongs to the short-chain dehydrogenases/reductases (SDR) family.

The catalysed reaction is (S)-benzoin + NADP(+) = benzil + NADPH + H(+). The enzyme catalyses 2-hydroxy-1-phenyl-1-propanone + NADP(+) = 1-phenyl-1,2-propanedione + NADPH + H(+). Its function is as follows. Reduces benzil stereospecifically to (S)-benzoin. Also reduces 1-phenyl-1,2-propanedione to 2-hydroxy-1-phenyl-1-propanone. Is probably involved in a pathway contributing to genomic integrity. This is Benzil reductase ((S)-benzoin forming) IRC24 (IRC24) from Saccharomyces cerevisiae (strain ATCC 204508 / S288c) (Baker's yeast).